Here is a 241-residue protein sequence, read N- to C-terminus: Translation initiation factor IF-3 (241 aa).

The segment covering 193–203 (AAEKARQKAIQ) has biased composition (basic and acidic residues). Positions 193 to 241 (AAEKARQKAIQEGRAAPAQDDTEDEEIEKLERELEEQDDEDDDEAEATE) are disordered. The span at 212–241 (DDTEDEEIEKLERELEEQDDEDDDEAEATE) shows a compositional bias: acidic residues.

This sequence belongs to the IF-3 family. In terms of assembly, monomer.

It is found in the cytoplasm. IF-3 binds to the 30S ribosomal subunit and shifts the equilibrium between 70S ribosomes and their 50S and 30S subunits in favor of the free subunits, thus enhancing the availability of 30S subunits on which protein synthesis initiation begins. The protein is Translation initiation factor IF-3 of Sorangium cellulosum (strain So ce56) (Polyangium cellulosum (strain So ce56)).